Consider the following 247-residue polypeptide: tRNA pseudouridine synthase A 1 (247 aa).

D53 (nucleophile) is an active-site residue. A substrate-binding site is contributed by Y111.

It belongs to the tRNA pseudouridine synthase TruA family. In terms of assembly, homodimer.

It carries out the reaction uridine(38/39/40) in tRNA = pseudouridine(38/39/40) in tRNA. Functionally, formation of pseudouridine at positions 38, 39 and 40 in the anticodon stem and loop of transfer RNAs. This is tRNA pseudouridine synthase A 1 from Bacillus cereus (strain ATCC 10987 / NRS 248).